Here is a 124-residue protein sequence, read N- to C-terminus: Calvin cycle protein CP12-1, chloroplastic (124 aa).

A chloroplast-targeting transit peptide spans 1 to 47; sequence MTTIAAAGLNVATPRVVVRPVARVLGPVRLNYPWKFGSMKRMVVVKA. 2 cysteine pairs are disulfide-bonded: Cys-68-Cys-77 and Cys-110-Cys-119. Residues 90–124 are disordered; the sequence is AASHARDKKKAGGSDPLEEYCNDNPETDECRTYDN. A compositionally biased stretch (acidic residues) spans 105-116; the sequence is PLEEYCNDNPET.

The protein belongs to the CP12 family. In terms of assembly, monomer. Component of a complex that contains two dimers of PRK, two tetramers of GAPDH and CP12. CP12 associates with GAPDH, causing its conformation to change. This GAPDH/CP12 complex binds PRK to form a half-complex (one unit). This unit probably dimerizes due partially to interactions between the enzymes of each unit. Post-translationally, contains two disulfide bonds; only the oxidized protein, with two disulfide bonds, is active in complex formation. The C-terminal disulfide is involved in the interaction with GAPDH and the N-terminal disulfide mediates the binding of PRK with this binary complex. Mostly expressed in flowers, hypocotyl, cotyledons, leaves, stems, and flower stalks. Barely detectable in roots and siliques. Present in root tips and lateral roots. Accumulates in the cotyledons of etiolated seedlings.

The protein localises to the plastid. The protein resides in the chloroplast. Its function is as follows. Acts as a linker essential in the assembly of a core complex of PRK/GAPDH. Coordinates the reversible inactivation of chloroplast enzymes GAPDH and PRK during darkness in photosynthetic tissues. The polypeptide is Calvin cycle protein CP12-1, chloroplastic (CP12-1) (Arabidopsis thaliana (Mouse-ear cress)).